The following is a 447-amino-acid chain: Putative branched-chain amino acid carrier protein SAUSA300_1300 (447 aa).

12 helical membrane passes run 6 to 26 (WVIGFTLFAMFFGAGNLIFPP), 40 to 60 (ILAFVLTGIGLPLLGVIVGAL), 74 to 94 (PKFSILFLIIIYLTIGPLFAI), 114 to 134 (SSIALFIFTIIYFIVVLYICL), 143 to 163 (IGSLLTPLLLITILAMIIKGY), 193 to 213 (GYLTMDAIAAIAFSMIVVNAV), 229 to 249 (LTAGLIAAVALIFIYISLGYI), 290 to 310 (LLGIIVALACLTTACGLIVAV), 326 to 346 (FVLVFILMSFIIANQGLNAVI), 350 to 370 (IPVLSIVYPVAITVVLLILIA), 382 to 402 (IPVIIVFILSIFSVISKLGWL), and 417 to 437 (LEWFPVAIIATILGYLVGIFV).

Belongs to the branched chain amino acid transporter family.

It localises to the cell membrane. Its function is as follows. Component of the transport system for branched-chain amino acids (leucine, isoleucine and valine), which is coupled to a proton motive force (Potential). Contributes to NaCl tolerance. This chain is Putative branched-chain amino acid carrier protein SAUSA300_1300, found in Staphylococcus aureus (strain USA300).